The following is a 395-amino-acid chain: Sulfate adenylyltransferase (395 aa).

Belongs to the sulfate adenylyltransferase family.

The catalysed reaction is sulfate + ATP + H(+) = adenosine 5'-phosphosulfate + diphosphate. Its pathway is sulfur metabolism; hydrogen sulfide biosynthesis; sulfite from sulfate: step 1/3. This chain is Sulfate adenylyltransferase, found in Synechococcus elongatus (strain ATCC 33912 / PCC 7942 / FACHB-805) (Anacystis nidulans R2).